A 320-amino-acid polypeptide reads, in one-letter code: uncharacterized protein (320 aa).

Residues 1 to 23 (MKLNLRFPSYFLPVVAASAFLVS) form the signal peptide. Cys-24 carries the N-palmitoyl cysteine lipid modification. Residue Cys-24 is the site of S-diacylglycerol cysteine attachment. Positions 160 to 181 (KNHEHGHTHKNGETHEHDHDHH) are disordered.

Its subcellular location is the cell membrane. This is an uncharacterized protein from Mycoplasma pneumoniae (strain ATCC 29342 / M129 / Subtype 1) (Mycoplasmoides pneumoniae).